A 416-amino-acid chain; its full sequence is Cyclic dinucleotide synthase CdnG (416 aa).

S72 contacts GTP. Active-site residues include D89, D91, and D140. Residue D91 coordinates GTP. D91 provides a ligand contact to Mg(2+). Residues 145-167 form a disordered region; the sequence is RRRAPKEKEGEIPHAKKGTRSDP. The span at 150 to 167 shows a compositional bias: basic and acidic residues; it reads KEKEGEIPHAKKGTRSDP. GTP-binding residues include K236, S253, E305, R306, and D309.

It belongs to the CD-NTase family. G10 subfamily. Requires Mg(2+) as cofactor.

The enzyme catalyses UTP + GTP = 3',3'-cGMP-UMP + 2 diphosphate. It carries out the reaction GTP + ATP = 3',3'-cGAMP + 2 diphosphate. It catalyses the reaction 2 ATP = 3',3'-c-di-AMP + 2 diphosphate. Functionally, cyclic nucleotide synthase (second messenger synthase) of a CBASS antivirus system. CBASS (cyclic oligonucleotide-based antiphage signaling system) provides immunity against bacteriophage. The CD-NTase protein synthesizes cyclic nucleotides in response to infection; these serve as specific second messenger signals. The signals activate a diverse range of effectors, leading to bacterial cell death and thus abortive phage infection. A type II-short CBASS system. In terms of biological role, cyclic dinucleotide synthase that catalyzes the synthesis of predominantly 3'3'-cGMP-UMP, followed by 3'3'-cGAMP and c-di-AMP in a reaction mixture of ATP, CTP, GTP and UTP. The cyclic nucleotide products are second messengers that activate the CBASS Cap5 effector nuclease, leading to DNA degradation and probably cell death. Cyclic nucleotides do not activate the effector equally; reactions with ATP/GTP, ATP/UTP and ATP alone activate Cap5, whereas reaction with GTP/UTP (the major in vitro product) do not. The polypeptide is Cyclic dinucleotide synthase CdnG (Bradyrhizobium diazoefficiens (strain JCM 10833 / BCRC 13528 / IAM 13628 / NBRC 14792 / USDA 110)).